The following is a 345-amino-acid chain: Anthranilate phosphoribosyltransferase (345 aa).

Residues Gly-84, 87–88 (GD), Thr-92, 94–97 (NIST), 112–120 (KHGNRSVSS), and Ser-124 contribute to the 5-phospho-alpha-D-ribose 1-diphosphate site. Gly-84 contacts anthranilate. Ser-96 is a Mg(2+) binding site. Asn-115 contributes to the anthranilate binding site. Arg-170 lines the anthranilate pocket. Positions 229 and 230 each coordinate Mg(2+).

Belongs to the anthranilate phosphoribosyltransferase family. In terms of assembly, homodimer. It depends on Mg(2+) as a cofactor.

It carries out the reaction N-(5-phospho-beta-D-ribosyl)anthranilate + diphosphate = 5-phospho-alpha-D-ribose 1-diphosphate + anthranilate. It functions in the pathway amino-acid biosynthesis; L-tryptophan biosynthesis; L-tryptophan from chorismate: step 2/5. Its function is as follows. Catalyzes the transfer of the phosphoribosyl group of 5-phosphorylribose-1-pyrophosphate (PRPP) to anthranilate to yield N-(5'-phosphoribosyl)-anthranilate (PRA). This Xanthomonas campestris pv. campestris (strain 8004) protein is Anthranilate phosphoribosyltransferase.